The following is a 146-amino-acid chain: MKYVHVGVNVVSLEKSINFYEKVFGVKAVKVKTDYAKFLLETPGLNFTLNVADEVKGNQVNHFGFQVDSLEEVLKHKKRLEKEGFFAREEMDTTCCYAVQDKFWITDPDGNEWEFFYTKSNSEVQKQDSSSCCVTPPSDITTNSCC.

In terms of domain architecture, VOC spans Lys-2–Thr-118. Positions 5 and 62 each coordinate Fe(2+). Roxarsone (III) contacts are provided by Cys-95 and Cys-96. Glu-114 lines the Fe(2+) pocket.

It to M.tuberculosis Rv2641. It depends on Fe(2+) as a cofactor.

It carries out the reaction methylarsonous acid + AH2 + O2 = arsenite + methanol + A + H(+). The enzyme catalyses roxarsone (III) + AH2 + O2 = 4-hydroxy-3-nitrocyclohexa-2,5-dien-1-one + arsenite + A + H(+). It catalyses the reaction nitarsone (III) + AH2 + O2 = 4-nitrocyclohexa-2,5-dien-1-one + arsenite + A + H(+). The catalysed reaction is 4-aminophenylarsonous acid + AH2 + O2 = 4-aminocyclohexa-2,5-dien-1-one + arsenite + A. Functionally, nonheme iron-dependent dioxygenase that can break carbon-arsenic bonds, playing a role in the detoxification of environmental organoarsenical compounds. Catalyzes the oxygen-dependent demethylation of highly toxic methylarsonous acid (MAs(III)) to arsenite, which can then be exported out of the cell. Can also cleave the C-As bond in several trivalent aromatic arsenicals, including roxarsone (III), nitarsone (III) and (4-aminophenyl)arsonous acid. Organoarsenical degradation by this enzyme is proposed to have a significant impact on the arsenic biogeocycle that maintains a balance between organic and inorganic species. In Bacillus subtilis (strain 168), this protein is Probable trivalent organoarsenical cleaving enzyme (yqcK).